A 502-amino-acid polypeptide reads, in one-letter code: MMDGRSILMGRYEVGKQLGQGTFAKVYYARNLTTGQAVAIKMINKDKVMKVGLMEQIKREISIMRLVKHPNVLQLFEVMASKSKIYFVLEYAKGGELFNKIAKEGKLSEDSARRYFHQLINAVDYCHSRGVYHRDLKPENLLLDENENLKVSDFGLSALAESKRQDGLLHTTCGTPAYVAPEVLSRKGYDGAKADVWSCGVILFVLVAGYLPFHDPNLIEMYRKICRADFRCPRYFSAELKDLIHKILDSDPSTRISIPRIKRSTWYRKPVEINAKNSEAATTNSISSGVATTSGSAECSTSEENQGSLSLPNLNAFDIISLSTGFNLSGFFEDTHGHQEERFTTRQPVTTVLGKLKELAKRLKLKVKKKDNGVLRLAAPKEGKKGFLELDAEIFEVTPSFLLVELKKTNGDTMEYRKLVKEDIRPALKDIVWVWQGDEHLNSQSILQGEQQQSPLPPELPQDQLQPSLPQQEKQDMPEPPLLPQVPQEEVQTSIPAEQTKN.

Residues tyrosine 12–tyrosine 267 enclose the Protein kinase domain. ATP-binding positions include leucine 18–valine 26 and lysine 41. The Proton acceptor role is filled by aspartate 135. The activation loop stretch occupies residues aspartate 153–glutamate 182. Residues alanine 297–glutamate 333 enclose the NAF domain. Positions glutamine 339–valine 367 are PPI. The interval leucine 447–asparagine 502 is disordered. Positions proline 461–glutamine 472 are enriched in low complexity. A compositionally biased stretch (polar residues) spans threonine 493–asparagine 502.

Belongs to the protein kinase superfamily. CAMK Ser/Thr protein kinase family. SNF1 subfamily. The cofactor is Mn(2+).

It catalyses the reaction L-seryl-[protein] + ATP = O-phospho-L-seryl-[protein] + ADP + H(+). It carries out the reaction L-threonyl-[protein] + ATP = O-phospho-L-threonyl-[protein] + ADP + H(+). Its function is as follows. CIPK serine-threonine protein kinases interact with CBL proteins. Binding of a CBL protein to the regulatory NAF domain of CIPK protein lead to the activation of the kinase in a calcium-dependent manner. In Oryza sativa subsp. japonica (Rice), this protein is CBL-interacting protein kinase 11 (CIPK11).